The following is a 172-amino-acid chain: Inorganic pyrophosphatase (172 aa).

Substrate contacts are provided by K26, R40, and Y52. Residues D62, D67, and D99 each contribute to the Mg(2+) site. Position 138 (Y138) interacts with substrate.

This sequence belongs to the PPase family. In terms of assembly, homohexamer. Requires Mg(2+) as cofactor.

It localises to the cytoplasm. The enzyme catalyses diphosphate + H2O = 2 phosphate + H(+). Its function is as follows. Catalyzes the hydrolysis of inorganic pyrophosphate (PPi) forming two phosphate ions. The protein is Inorganic pyrophosphatase of Saccharolobus solfataricus (strain ATCC 35092 / DSM 1617 / JCM 11322 / P2) (Sulfolobus solfataricus).